Reading from the N-terminus, the 436-residue chain is Probable ABC transporter binding protein NosD (436 aa).

Positions 1 to 27 are cleaved as a signal peptide; that stretch reads MFKAQATFSRYSAAVSLLLLFSGAAQA. 8 PbH1 repeats span residues 85–113, 115–136, 137–166, 167–188, 189–210, 233–255, 293–314, and 316–354; these read APDVLVEGCTLYEWGSDLTAMDSAVFILP, AERAQISNNRMRGPGFGVFVDG, TRDVQVIGNEIDGDAGVRSQDRGNGIHLFA, VSGARVLHNHVRNARDGIYIDT, SNGNHLEGNVIEDVRYGVHYMF, SRKLTVTGNRSEQDQNYGILMNY, SLFNTIENNHFEKSSLGIHLTA, and SEDNRISGNAFVGNQQQVKYVASRTQEWSVDGRGNYWSD.

The protein belongs to the NosD family. As to quaternary structure, the complex may be composed of an ATP-binding protein (NosF), a transmembrane protein (NosY) and a solute-binding protein (NosD).

The protein localises to the periplasm. Its function is as follows. Required for the assembly of the copper chromophores of nitrous oxide reductase. Could be part of the ABC transporter complex NosDFY. The protein is Probable ABC transporter binding protein NosD of Stutzerimonas stutzeri (Pseudomonas stutzeri).